Reading from the N-terminus, the 98-residue chain is Small ribosomal subunit protein bS20 (98 aa).

The segment covering 1-12 has biased composition (basic residues); the sequence is MAPRKPSKKVGP. The disordered stretch occupies residues 1-31; sequence MAPRKPSKKVGPQKRPSAEKRVITSKKKQLR.

It belongs to the bacterial ribosomal protein bS20 family.

Functionally, binds directly to 16S ribosomal RNA. The sequence is that of Small ribosomal subunit protein bS20 from Chlamydia trachomatis serovar L2 (strain ATCC VR-902B / DSM 19102 / 434/Bu).